A 392-amino-acid polypeptide reads, in one-letter code: uncharacterized protein (392 aa).

It belongs to the hcp1 family.

This is an uncharacterized protein from Escherichia coli (strain K12).